Reading from the N-terminus, the 260-residue chain is Carbonic anhydrase 3 (260 aa).

Alanine 2 carries the N-acetylalanine modification. An Alpha-carbonic anhydrase domain is found at 3–259 (KEWGYASHNG…IKGRVVRASF (257 aa)). Phosphoserine occurs at positions 29, 43, 48, 50, and 55. Residues 64-67 (KTCR) are involved in proton transfer. Threonine 73 is subject to Phosphothreonine. Zn(2+) contacts are provided by histidine 94, histidine 96, and histidine 119. Position 127 is a phosphotyrosine (tyrosine 127). Threonine 129 is modified (phosphothreonine). S-glutathionyl cysteine occurs at positions 182 and 187. Substrate is bound at residue 198–199 (TT). Position 216 is a phosphothreonine (threonine 216). Phosphoserine is present on serine 219.

The protein belongs to the alpha-carbonic anhydrase family. The cofactor is Zn(2+). Post-translationally, S-thiolated both by thiol-disulfide exchange with glutathione disulfide and by oxyradical-initiated S-thiolation with reduced glutathione. In terms of processing, S-glutathionylated in hepatocytes under oxidative stress. As to expression, expressed in liver and muscle.

It is found in the cytoplasm. The enzyme catalyses hydrogencarbonate + H(+) = CO2 + H2O. With respect to regulation, inhibited by acetazolamide. Its function is as follows. Reversible hydration of carbon dioxide. This is Carbonic anhydrase 3 (Ca3) from Rattus norvegicus (Rat).